Here is a 316-residue protein sequence, read N- to C-terminus: MLRGWGGPSVGVSMGTALGVLCLCLTGAVEVQVSEDPVVALVDTDATLRCSFSPEPGFSLRQLNLIWQLTDTKQLVHSFTEGRDQGSAYANRTALFPDLLVQGNASLRLQRVRVTDEGSYTCFVSIQDFDSAAVSLQVAAPYSKPSMTLEPNKDLRPGDMVTITCSSYQGYPEAEVFWKDGQGLPLTGNVTTSQMANERGLFDVHSVLRVVLGANGTYSCLVRNPVLQQDAHGSVTITGQPMTFPPEALWVTVGLSVCLVILLVALAFVCWRKIKQSCEEENAGAEDQDGDGEGSKTALRPLKHSENKEDDGQEIA.

The first 28 residues, 1 to 28 (MLRGWGGPSVGVSMGTALGVLCLCLTGA), serve as a signal peptide directing secretion. Positions 29 to 139 (VEVQVSEDPV…DSAAVSLQVA (111 aa)) constitute an Ig-like V-type domain. Over 29-248 (VEVQVSEDPV…GQPMTFPPEA (220 aa)) the chain is Extracellular. Residues asparagine 104, asparagine 189, and asparagine 215 are each glycosylated (N-linked (GlcNAc...) asparagine). Residues 145–238 (PSMTLEPNKD…QDAHGSVTIT (94 aa)) enclose the Ig-like C2-type domain. Residues cysteine 165 and cysteine 220 are joined by a disulfide bond. The helical transmembrane segment at 249–269 (LWVTVGLSVCLVILLVALAFV) threads the bilayer. The Cytoplasmic segment spans residues 270-316 (CWRKIKQSCEEENAGAEDQDGDGEGSKTALRPLKHSENKEDDGQEIA). Residues 281–292 (ENAGAEDQDGDG) are compositionally biased toward acidic residues. The tract at residues 281–316 (ENAGAEDQDGDGEGSKTALRPLKHSENKEDDGQEIA) is disordered.

This sequence belongs to the immunoglobulin superfamily. BTN/MOG family. As to quaternary structure, interacts with TREML2 and this interaction enhances T-cell activation.

It localises to the membrane. In terms of biological role, modulates T-cell-mediated immune responses and the development of acute and chronic transplant rejection. May play a positive regulatory role in bone formation and has a dual role in the bone-immune interface. Induces antitumor immunity as it activates both acquired and innate immunity leading to natural killer cell and CD8 T-cell dependent killing of tumor cells. The polypeptide is CD276 antigen (Cd276) (Rattus norvegicus (Rat)).